The following is a 376-amino-acid chain: tRNA-specific 2-thiouridylase MnmA (376 aa).

Residues 16 to 23 and Leu42 each bind ATP; that span reads AMSGGVDS. Cys111 functions as the Nucleophile in the catalytic mechanism. Residues Cys111 and Cys210 are joined by a disulfide bond. Gly135 is a binding site for ATP. The interaction with tRNA stretch occupies residues 158–160; it reads KDQ. Catalysis depends on Cys210, which acts as the Cysteine persulfide intermediate.

This sequence belongs to the MnmA/TRMU family.

It localises to the cytoplasm. It catalyses the reaction S-sulfanyl-L-cysteinyl-[protein] + uridine(34) in tRNA + AH2 + ATP = 2-thiouridine(34) in tRNA + L-cysteinyl-[protein] + A + AMP + diphosphate + H(+). In terms of biological role, catalyzes the 2-thiolation of uridine at the wobble position (U34) of tRNA, leading to the formation of s(2)U34. In Streptomyces coelicolor (strain ATCC BAA-471 / A3(2) / M145), this protein is tRNA-specific 2-thiouridylase MnmA.